The following is a 465-amino-acid chain: Uronate isomerase (465 aa).

This sequence belongs to the metallo-dependent hydrolases superfamily. Uronate isomerase family.

It catalyses the reaction D-glucuronate = D-fructuronate. The enzyme catalyses aldehydo-D-galacturonate = keto-D-tagaturonate. The protein operates within carbohydrate metabolism; pentose and glucuronate interconversion. This chain is Uronate isomerase, found in Streptococcus equi subsp. zooepidemicus (strain H70).